Reading from the N-terminus, the 347-residue chain is Glucose 1-dehydrogenase (347 aa).

Cys-39 lines the Zn(2+) pocket. A substrate-binding site is contributed by Thr-41. 2 residues coordinate Zn(2+): His-64 and Glu-65. 2 residues coordinate substrate: Glu-110 and Glu-146. Position 146 (Glu-146) interacts with Zn(2+). NADP(+) is bound by residues 178 to 181 (AGPV), 260 to 262 (LGV), and 289 to 291 (SVN). Asn-291 contacts substrate.

This sequence belongs to the zinc-containing alcohol dehydrogenase family. Glucose 1-dehydrogenase subfamily. In terms of assembly, homodimer. Zn(2+) is required as a cofactor.

The enzyme catalyses D-glucose + NAD(+) = D-glucono-1,5-lactone + NADH + H(+). It carries out the reaction D-glucose + NADP(+) = D-glucono-1,5-lactone + NADPH + H(+). In terms of biological role, catalyzes the NAD(P)(+)-dependent oxidation of D-glucose to D-gluconate via gluconolactone. To a lesser extent, is also active with xylose as substrate, but mannose, arabinose, galactose, fructose 6-phosphate, glucose 6-phosphate, glycerinaldehyde 3-phosphate, ribose, sorbitol, ethanol, erythritol, or lactose are not oxidized by the enzyme. Can utilize both NAD(+) and NADP(+) as electron acceptor, with a marked preference for NADP(+). Is involved in the degradation of glucose through a non-phosphorylative variant of the Entner-Doudoroff pathway. The protein is Glucose 1-dehydrogenase (gdh) of Thermoproteus tenax (strain ATCC 35583 / DSM 2078 / JCM 9277 / NBRC 100435 / Kra 1).